The chain runs to 150 residues: 3-hydroxyacyl-[acyl-carrier-protein] dehydratase FabZ (150 aa).

H52 is an active-site residue.

It belongs to the thioester dehydratase family. FabZ subfamily.

Its subcellular location is the cytoplasm. The catalysed reaction is a (3R)-hydroxyacyl-[ACP] = a (2E)-enoyl-[ACP] + H2O. In terms of biological role, involved in unsaturated fatty acids biosynthesis. Catalyzes the dehydration of short chain beta-hydroxyacyl-ACPs and long chain saturated and unsaturated beta-hydroxyacyl-ACPs. In Albidiferax ferrireducens (strain ATCC BAA-621 / DSM 15236 / T118) (Rhodoferax ferrireducens), this protein is 3-hydroxyacyl-[acyl-carrier-protein] dehydratase FabZ.